The sequence spans 28 residues: GCMPEYCAGQCRGKVSQDYCLKNCRCIR.

3 cysteine pairs are disulfide-bonded: Cys2/Cys24, Cys7/Cys20, and Cys11/Cys26.

In terms of tissue distribution, expressed by the venom gland.

Its subcellular location is the secreted. Its function is as follows. Blocks potassium channels Shaker-IR (with inactivation domain removed) and hKv1.2/KCNA2. The polypeptide is Kappa-buthitoxin-Tt2b (Tityus trivittatus (Argentinean scorpion)).